A 479-amino-acid chain; its full sequence is Aspartyl/glutamyl-tRNA(Asn/Gln) amidotransferase subunit B (479 aa).

It belongs to the GatB/GatE family. GatB subfamily. As to quaternary structure, heterotrimer of A, B and C subunits.

It carries out the reaction L-glutamyl-tRNA(Gln) + L-glutamine + ATP + H2O = L-glutaminyl-tRNA(Gln) + L-glutamate + ADP + phosphate + H(+). It catalyses the reaction L-aspartyl-tRNA(Asn) + L-glutamine + ATP + H2O = L-asparaginyl-tRNA(Asn) + L-glutamate + ADP + phosphate + 2 H(+). Its function is as follows. Allows the formation of correctly charged Asn-tRNA(Asn) or Gln-tRNA(Gln) through the transamidation of misacylated Asp-tRNA(Asn) or Glu-tRNA(Gln) in organisms which lack either or both of asparaginyl-tRNA or glutaminyl-tRNA synthetases. The reaction takes place in the presence of glutamine and ATP through an activated phospho-Asp-tRNA(Asn) or phospho-Glu-tRNA(Gln). In Streptococcus suis (strain 98HAH33), this protein is Aspartyl/glutamyl-tRNA(Asn/Gln) amidotransferase subunit B.